The sequence spans 313 residues: WD repeat-containing protein 82 (313 aa).

WD repeat units lie at residues 19–58, 105–144, 146–184, 192–231, 236–276, and 280–313; these read ENSD…PKRT, GHSK…CQGL, HLQG…KGPF, DRTC…VMHT, ANSK…KVAV, and KHTG…TIDD.

It belongs to the WD repeat SWD2 family. In terms of assembly, component of the SET1/COMPASS complex, at least composed of the catalytic subunit (SETD1A or SETD1B), WDR5, WDR82, RBBP5, ASH2L/ASH2, CXXC1/CFP1, HCFC1 and DPY30. Component of the PNUTS-PP1 phosphatase complex, composed of PPP1R10/PNUTS, TOX4, WDR82, and PPP1CA or PPP1CB or PPP1CC. Associated with multiple protein complexes including an RNA polymerase II complex, MLL3/MLL4 complex and a chaperonin-containing TCP1 complex. Interacts with SETD1B (via N-terminal region); the interaction is direct. Interacts with SETD1A (via N-terminal region); the interaction is direct. Interacts with CUL4B. Interacts with RBBP5. Interacts with POLR2B. Interacts with hyperphosphorylated C-terminal domain (CTD) of RNA polymerase II large subunit (POLR2A). Binds specifically to CTD heptad repeats phosphorylated on 'Ser-5' of each heptad. SETD1A enhances its interaction with POLR2A. Interacts with PPP1R10/PNUTS. Interacts with PPP1CA in the presence of PPP1R10/PNUTS. Interacts with ZC3H4; interaction is independent of the SET1 complex and promotes transcription termination of long non-coding RNAs (lncRNAs).

The protein localises to the nucleus. It localises to the chromosome. Its subcellular location is the cytoplasm. Regulatory component of the SET1/COMPASS complex implicated in the tethering of this complex to transcriptional start sites of active genes. Facilitates histone H3 'Lys-4' methylation (H3K4me) via recruitment of the SETD1A or SETD1B to the 'Ser-5' phosphorylated C-terminal domain (CTD) of RNA polymerase II large subunit (POLR2A). Component of the PNUTS-PP1 protein phosphatase complex, a protein phosphatase 1 (PP1) complex that promotes RNA polymerase II transcription pause-release, allowing transcription elongation. PNUTS-PP1 also plays a role in the control of chromatin structure and cell cycle progression during the transition from mitosis into interphase. Together with ZC3H4, but independently of the SET1 complex, part of a transcription termination checkpoint that promotes transcription termination of long non-coding RNAs (lncRNAs). The transcription termination checkpoint is activated by the inefficiently spliced first exon of lncRNAs and promotes transcription termination of lncRNAs and their subsequent degradation by the exosome. This chain is WD repeat-containing protein 82, found in Homo sapiens (Human).